The chain runs to 579 residues: DBIRD complex subunit ZNF326 (579 aa).

Residues 1–124 (MDFEDDYTHS…YRNSLDSFGG (124 aa)) form a mediates transcriptional activation region. Phosphoserine is present on residues S48, S56, S63, S69, S81, S82, S91, S106, S114, S118, S121, and S137. K140 is covalently cross-linked (Glycyl lysine isopeptide (Lys-Gly) (interchain with G-Cter in SUMO2)). The tract at residues 154 to 194 (YSSYSSFSSPHMKPAPVGSRGRGTPAYPESTFGSRNYDAFG) is disordered. R173 is modified (omega-N-methylarginine). S212 carries the post-translational modification Phosphoserine. The residue at position 235 (R235) is an Omega-N-methylarginine. The Bipartite nuclear localization signal motif lies at 238–260 (KRKMIQPFNKPGGTFIKKPKLAK). A Glycyl lysine isopeptide (Lys-Gly) (interchain with G-Cter in SUMO2) cross-link involves residue K240. N6-acetyllysine; alternate is present on K247. K247 is covalently cross-linked (Glycyl lysine isopeptide (Lys-Gly) (interchain with G-Cter in SUMO2); alternate). The segment at 248–302 (PGGTFIKKPKLAKPVEKMSLSKSPTKTDPKNEEEEKRRIEARREKQRRRREKNSE) is disordered. A Phosphothreonine modification is found at T251. Residues K254 and K264 each participate in a glycyl lysine isopeptide (Lys-Gly) (interchain with G-Cter in SUMO2) cross-link. Position 270 is a phosphoserine (S270). Residues 272-290 (TKTDPKNEEEEKRRIEARR) are compositionally biased toward basic and acidic residues. The C2H2 AKAP95-type 1 zinc-finger motif lies at 314–336 (CSFCKFRTFEEKDIELHLESASH). K401 is covalently cross-linked (Glycyl lysine isopeptide (Lys-Gly) (interchain with G-Cter in SUMO2)). The segment at 407–430 (CSACSVYIPALHSSVQQHLKSPDH) adopts a C2H2 AKAP95-type 2 zinc-finger fold. Glycyl lysine isopeptide (Lys-Gly) (interchain with G-Cter in SUMO2) cross-links involve residues K459 and K467. The interval 470-579 (NPFEIQDHSQ…GFSVDQAEEN (110 aa)) is disordered. Acidic residues-rich tracts occupy residues 483–520 (IEGDEEEEEKIDEPVEEEEEEEEEEEEVGEVEEAEEVG), 529–541 (GDTEEGGDVEGEG), and 549–565 (GEGEGEGVGEVEEEEAK).

The protein belongs to the AKAP95 family. In terms of assembly, component of the DBIRD complex. Interacts with CCAR2; the interaction is direct.

It is found in the nucleus matrix. Its function is as follows. Core component of the DBIRD complex, a multiprotein complex that acts at the interface between core mRNP particles and RNA polymerase II (RNAPII) and integrates transcript elongation with the regulation of alternative splicing: the DBIRD complex affects local transcript elongation rates and alternative splicing of a large set of exons embedded in (A + T)-rich DNA regions. May play a role in neuronal differentiation and is able to bind DNA and activate expression in vitro. The polypeptide is DBIRD complex subunit ZNF326 (ZNF326) (Bos taurus (Bovine)).